Reading from the N-terminus, the 444-residue chain is Transcriptional coactivator nsrH (444 aa).

Residues 74 to 144 enclose the HTH iclR-type domain; sequence ASQVSEILAC…ERDHVAHTPL (71 aa). Residues 104-123 constitute a DNA-binding region (H-T-H motif); sequence IKDIADLTNVPESRLRRIIR.

The protein resides in the nucleus. In terms of biological role, transcriptional coactivator; part of the gene cluster that mediates the biosynthesis of the tetrahydroxanthone dimer neosartorin, which exhibits antibacterial activity. This is Transcriptional coactivator nsrH from Aspergillus novofumigatus (strain IBT 16806).